The chain runs to 516 residues: Probable D,D-dipeptide-binding periplasmic protein DdpA (516 aa).

Residues 1-25 (MKRSISFRPTLLALVLATNFPVAHA) form the signal peptide.

This sequence belongs to the bacterial solute-binding protein 5 family. As to quaternary structure, the complex is composed of two ATP-binding proteins (DdpD and DdpF), two transmembrane proteins (DdpB and DdpC) and a solute-binding protein (DdpA).

Its subcellular location is the periplasm. Functionally, part of the ABC transporter complex DdpABCDF, which is probably involved in D,D-dipeptide transport. This is Probable D,D-dipeptide-binding periplasmic protein DdpA (ddpA) from Escherichia coli (strain K12).